The following is a 303-amino-acid chain: Ribosomal RNA small subunit methyltransferase H (303 aa).

S-adenosyl-L-methionine is bound by residues 33-35, D52, F78, D99, and Q106; that span reads GGH.

Belongs to the methyltransferase superfamily. RsmH family.

The protein resides in the cytoplasm. The enzyme catalyses cytidine(1402) in 16S rRNA + S-adenosyl-L-methionine = N(4)-methylcytidine(1402) in 16S rRNA + S-adenosyl-L-homocysteine + H(+). Functionally, specifically methylates the N4 position of cytidine in position 1402 (C1402) of 16S rRNA. This Phytoplasma australiense protein is Ribosomal RNA small subunit methyltransferase H.